Reading from the N-terminus, the 86-residue chain is uncharacterized protein (86 aa).

It to B.subtilis spore coat protein C.

This is an uncharacterized protein from Bacillus subtilis (strain 168).